A 72-amino-acid polypeptide reads, in one-letter code: Guanine nucleotide-binding protein subunit gamma (72 aa).

The interval 32–72 (MVSVAPPKANPSVSSKTKQQQHFKPGKATKDKATTKCCTIS) is disordered. Residue Cys-68 is the site of S-palmitoyl cysteine attachment. Cys-69 is subject to Cysteine methyl ester. Cys-69 carries the S-farnesyl cysteine lipid modification. Positions 70–72 (TIS) are cleaved as a propeptide — removed in mature form.

It belongs to the G protein gamma family. In terms of assembly, g proteins are composed of 3 units, alpha, beta and gamma. Binding of the beta-gamma subunit complex (git5-git11) to the alpha subunit (gpa2) facilitates interaction with GPCR git3.

Its subcellular location is the cell membrane. Its function is as follows. Gamma subunit of the heterotrimeric guanine nucleotide-binding protein (G protein) involved in glucose-induced cAMP signaling. The beta-gamma subunits (git5-git11) promote binding of the alpha subunit gpa2 to GPCR git3, which senses extracellular glucose, to activate cAMP-PKA signaling and repress sexual development and gluconeogenesis. The polypeptide is Guanine nucleotide-binding protein subunit gamma (git11) (Schizosaccharomyces pombe (strain 972 / ATCC 24843) (Fission yeast)).